A 103-amino-acid chain; its full sequence is Carboxysome shell protein CcmK3 (103 aa).

Positions 4–91 (AVGVIQTLGF…PPENVLAVLP (88 aa)) constitute a BMC domain.

Belongs to the bacterial microcompartments protein family. CcmK subfamily. As to quaternary structure, forms mixed heterohexamers with CcmK4, probably with 1:5 CcmK3:CcmK4 stoichiometry. Only very weak interactions with CcmK1 and CcmK2 were seen. Bulky residues in the pore region probably preclude the formation of homohexamers by this subunit.

The protein resides in the carboxysome. A probably minor shell protein component of the carboxysome, a polyhedral inclusion where RuBisCO (ribulose bisphosphate carboxylase, rbcL-rbcS) is sequestered. This subunit probably does not form homohexamers. In Synechocystis sp. (strain ATCC 27184 / PCC 6803 / Kazusa), this protein is Carboxysome shell protein CcmK3.